The sequence spans 276 residues: Undecaprenyl-diphosphatase (276 aa).

6 helical membrane-spanning segments follow: residues 43–63 (RAMA…VWEF), 85–105 (INLL…ADLI), 109–129 (LFNP…MLWA), 184–204 (ATEF…VYSG), 218–238 (VFAI…KGLL), and 254–274 (IAFG…WTAA).

It belongs to the UppP family.

The protein localises to the cell inner membrane. It catalyses the reaction di-trans,octa-cis-undecaprenyl diphosphate + H2O = di-trans,octa-cis-undecaprenyl phosphate + phosphate + H(+). In terms of biological role, catalyzes the dephosphorylation of undecaprenyl diphosphate (UPP). Confers resistance to bacitracin. The polypeptide is Undecaprenyl-diphosphatase (Pseudomonas fluorescens (strain ATCC BAA-477 / NRRL B-23932 / Pf-5)).